A 313-amino-acid polypeptide reads, in one-letter code: Fructose-1,6-bisphosphatase class 1 (313 aa).

4 residues coordinate Mg(2+): E90, D111, L113, and D114. Substrate is bound by residues D114–S117, Y222, and K253. E259 is a binding site for Mg(2+).

The protein belongs to the FBPase class 1 family. In terms of assembly, homotetramer. Mg(2+) serves as cofactor.

It is found in the cytoplasm. The enzyme catalyses beta-D-fructose 1,6-bisphosphate + H2O = beta-D-fructose 6-phosphate + phosphate. It functions in the pathway carbohydrate biosynthesis; gluconeogenesis. The protein is Fructose-1,6-bisphosphatase class 1 of Geotalea uraniireducens (strain Rf4) (Geobacter uraniireducens).